The following is a 146-amino-acid chain: Large ribosomal subunit protein uL22 (146 aa).

The protein belongs to the universal ribosomal protein uL22 family. In terms of assembly, part of the 50S ribosomal subunit.

This protein binds specifically to 23S rRNA; its binding is stimulated by other ribosomal proteins, e.g. L4, L17, and L20. It is important during the early stages of 50S assembly. It makes multiple contacts with different domains of the 23S rRNA in the assembled 50S subunit and ribosome. Its function is as follows. The globular domain of the protein is located near the polypeptide exit tunnel on the outside of the subunit, while an extended beta-hairpin is found that lines the wall of the exit tunnel in the center of the 70S ribosome. The sequence is that of Large ribosomal subunit protein uL22 from Nocardioides sp. (strain ATCC BAA-499 / JS614).